The primary structure comprises 238 residues: Type III secretion protein hrcQa (238 aa).

A hrcQa-C region spans residues 66 to 238; the sequence is DAEALLSLLG…SHEEHRHHEY (173 aa).

Interacts with hrcQb.

It is found in the cell inner membrane. Component of the type III secretion system, which is required for effector protein delivery, parasitism, and pathogenicity. Probably participates in the formation of a C-ring-like assembly along with hrcQb. The chain is Type III secretion protein hrcQa (hrcQa) from Pseudomonas savastanoi pv. phaseolicola (Pseudomonas syringae pv. phaseolicola).